We begin with the raw amino-acid sequence, 494 residues long: Alpha-amylase 1 (494 aa).

The signal sequence occupies residues 1-18 (MFLAKSIVCLALLAVANA). An intrachain disulfide couples Cys-46 to Cys-102. Asn-116, Arg-165, and Asp-174 together coordinate Ca(2+). Residues Cys-153 and Cys-167 are joined by a disulfide bond. Arg-202 serves as a coordination point for chloride. Catalysis depends on Asp-204, which acts as the Nucleophile. His-208 serves as a coordination point for Ca(2+). Glu-241 functions as the Proton donor in the catalytic mechanism. Chloride contacts are provided by Asn-304 and Arg-343. The interval 350–370 (FTDTDQGPPTTDGQNIASPSF) is disordered. The span at 351–363 (TDTDQGPPTTDGQ) shows a compositional bias: low complexity. 2 disulfides stabilise this stretch: Cys-376–Cys-382 and Cys-448–Cys-460.

The protein belongs to the glycosyl hydrolase 13 family. In terms of assembly, monomer. Requires Ca(2+) as cofactor. It depends on chloride as a cofactor.

It catalyses the reaction Endohydrolysis of (1-&gt;4)-alpha-D-glucosidic linkages in polysaccharides containing three or more (1-&gt;4)-alpha-linked D-glucose units.. The protein is Alpha-amylase 1 (Amy35) of Drosophila ananassae (Fruit fly).